A 128-amino-acid chain; its full sequence is Large ribosomal subunit protein mL52 (128 aa).

Residues 1–28 constitute a mitochondrion transit peptide; it reads MLQIAKLCLATSGRITAQRYVAVTTARA.

It belongs to the mitochondrion-specific ribosomal protein mL52 family. In terms of assembly, component of the mitochondrial ribosome large subunit (39S) which comprises a 16S rRNA and about 50 distinct proteins.

It localises to the mitochondrion. The chain is Large ribosomal subunit protein mL52 (mRpL52) from Drosophila pseudoobscura pseudoobscura (Fruit fly).